A 282-amino-acid polypeptide reads, in one-letter code: F-actin-capping protein subunit alpha (282 aa).

It belongs to the F-actin-capping protein alpha subunit family. As to quaternary structure, component of the F-actin capping complex, composed of a heterodimer of an alpha and a beta subunit.

The protein localises to the cytoplasm. It localises to the cytoskeleton. Functionally, F-actin-capping proteins bind in a Ca(2+)-independent manner to the fast growing ends of actin filaments (barbed end) thereby blocking the exchange of subunits at these ends. Unlike other capping proteins (such as gelsolin and severin), these proteins do not sever actin filaments. The protein is F-actin-capping protein subunit alpha (cap-1) of Caenorhabditis elegans.